The chain runs to 255 residues: Thiazole synthase (255 aa).

Lys95 serves as the catalytic Schiff-base intermediate with DXP. 1-deoxy-D-xylulose 5-phosphate is bound by residues Gly156, Ala182–Gly183, and Asn204–Thr205.

The protein belongs to the ThiG family. In terms of assembly, homotetramer. Forms heterodimers with either ThiH or ThiS.

Its subcellular location is the cytoplasm. It catalyses the reaction [ThiS sulfur-carrier protein]-C-terminal-Gly-aminoethanethioate + 2-iminoacetate + 1-deoxy-D-xylulose 5-phosphate = [ThiS sulfur-carrier protein]-C-terminal Gly-Gly + 2-[(2R,5Z)-2-carboxy-4-methylthiazol-5(2H)-ylidene]ethyl phosphate + 2 H2O + H(+). Its pathway is cofactor biosynthesis; thiamine diphosphate biosynthesis. In terms of biological role, catalyzes the rearrangement of 1-deoxy-D-xylulose 5-phosphate (DXP) to produce the thiazole phosphate moiety of thiamine. Sulfur is provided by the thiocarboxylate moiety of the carrier protein ThiS. In vitro, sulfur can be provided by H(2)S. The sequence is that of Thiazole synthase from Aeromonas salmonicida (strain A449).